Reading from the N-terminus, the 148-residue chain is Single-stranded DNA-binding protein, mitochondrial (148 aa).

Residues 1–16 (MFRRPALQVLRQFVRH) constitute a mitochondrion transit peptide. The SSB domain occupies 30–141 (LNRVQLLGRV…IIADNIVFLS (112 aa)). Serine 67 and serine 79 each carry phosphoserine. Residue lysine 113 is modified to N6-acetyllysine. Lysine 122 bears the N6-succinyllysine mark.

Homotetramer. Interacts with MPG/AAG, through inhibition of its glycosylase activity it potentially prevents formation of DNA breaks in ssDNA, ensuring that base removal primarily occurs in dsDNA. Interacts with POLDIP2. Interacts with PRIMPOL.

The protein resides in the mitochondrion. The protein localises to the mitochondrion matrix. It localises to the mitochondrion nucleoid. Functionally, binds preferentially and cooperatively to pyrimidine rich single-stranded DNA (ss-DNA). In vitro, required to maintain the copy number of mitochondrial DNA (mtDNA) and plays a crucial role during mtDNA replication by stimulating the activity of the replisome components POLG and TWNK at the replication fork. Promotes the activity of the gamma complex polymerase POLG, largely by organizing the template DNA and eliminating secondary structures to favor ss-DNA conformations that facilitate POLG activity. In addition it is able to promote the 5'-3' unwinding activity of the mtDNA helicase TWNK. May also function in mtDNA repair. This chain is Single-stranded DNA-binding protein, mitochondrial (SSBP1), found in Oryctolagus cuniculus (Rabbit).